The following is a 205-amino-acid chain: Beta-crystallin B2 (205 aa).

Alanine 2 carries the N-acetylalanine modification. The interval 2–16 (ASDHQTQAGKPQPLN) is N-terminal arm. Beta/gamma crystallin 'Greek key' domains are found at residues 17 to 56 (PKII…LVQA) and 57 to 101 (GPWV…RPIK). The segment at 102–106 (VDSQE) is connecting peptide. Beta/gamma crystallin 'Greek key' domains lie at 107–148 (HKII…RVQS) and 149–191 (GTWV…RRIR). The C-terminal arm stretch occupies residues 193 to 205 (MQWHQRGAFHPSN).

It belongs to the beta/gamma-crystallin family. Homo/heterodimer, or complexes of higher-order. The structure of beta-crystallin oligomers seems to be stabilized through interactions between the N-terminal arms.

Its function is as follows. Crystallins are the dominant structural components of the vertebrate eye lens. The protein is Beta-crystallin B2 (CRYBB2) of Canis lupus familiaris (Dog).